We begin with the raw amino-acid sequence, 206 residues long: LexA repressor (206 aa).

The H-T-H motif DNA-binding region spans 29 to 49; the sequence is VREICEAVGLRSTSTVHGHLA. Residues Ser130 and Lys167 each act as for autocatalytic cleavage activity in the active site.

The protein belongs to the peptidase S24 family. As to quaternary structure, homodimer.

The enzyme catalyses Hydrolysis of Ala-|-Gly bond in repressor LexA.. In terms of biological role, represses a number of genes involved in the response to DNA damage (SOS response), including recA and lexA. In the presence of single-stranded DNA, RecA interacts with LexA causing an autocatalytic cleavage which disrupts the DNA-binding part of LexA, leading to derepression of the SOS regulon and eventually DNA repair. This chain is LexA repressor, found in Alkaliphilus oremlandii (strain OhILAs) (Clostridium oremlandii (strain OhILAs)).